Reading from the N-terminus, the 249-residue chain is Serine 3-dehydrogenase (249 aa).

6–30 (LITGATSGFGQATARRFVKEGWKVI) lines the NADP(+) pocket. Serine 135 provides a ligand contact to substrate. Tyrosine 148 acts as the Proton acceptor in catalysis.

This sequence belongs to the short-chain dehydrogenases/reductases (SDR) family. Homotetramer.

It catalyses the reaction L-serine + NADP(+) = aminoacetaldehyde + CO2 + NADPH. Functionally, catalyzes the oxidation of the hydroxyl group of serine to form 2-aminomalonate semialdehyde which is spontaneously converted into 2-aminoacetaldehyde and CO(2). Also acts on D-serine, L-glycerate, D-glycerate and 2-methyl-DL-serine. Does not act on O-methyl-DL-serine and L-threonine. The chain is Serine 3-dehydrogenase (sdh) from Agrobacterium fabrum (strain C58 / ATCC 33970) (Agrobacterium tumefaciens (strain C58)).